Consider the following 533-residue polypeptide: Flavin-dependent halogenase gsfI (533 aa).

FAD is bound by residues Gly14, Gly17, and Glu47. Chloride is bound by residues Ser331 and Gly332.

This sequence belongs to the flavin-dependent halogenase family.

It catalyses the reaction griseophenone C + FADH2 + chloride + O2 = griseophenone B + FAD + 2 H2O + H(+). The protein operates within secondary metabolite biosynthesis; terpenoid biosynthesis. Functionally, flavin-dependent halogenase; part of the gene cluster that mediates the biosynthesis of griseofulvin, an important antifungal drug that has been in use for a long time for treating dermatophyte infections. The first step of the pathway is the formation of the heptaketide backbone by gsfA which is initiated by priming with acetyl-CoA, followed by sequential condensations of 6 malonyl-CoA units. The resulting benzophenone can undergo a spontaneous dehydration to form norlichexanthone. However, the true precursor for the griseofulvin biosynthesis is not norlichexanthone, but the heptaketide benzophenone that is O-methylated at 3-OH by gsfB to produce griseophenone D which is further methylated at 9-OH by gsfC to yield griseophenone C. Griseophenone C is then substrate of halogenase gsfI which is responsible for the regio-specific chlorination at the C13 position to form griseophenone B. The cytochrome P450 gsfF catalyzes the coupling of orcinol and phloroglucinol rings in griseophenone B to form desmethyl-dehydrogriseofulvin A which is further methylated at 5-OH by gsfD to yield dehydrogriseofulvin. Finally, gsfE performs stereospecific reduction of enone 18 of dehydrogriseofulvin to afford the final product griseofulvin. The polypeptide is Flavin-dependent halogenase gsfI (Penicillium aethiopicum).